The primary structure comprises 345 residues: Skn-1 dependent zygotic transcript 15 protein (345 aa).

One can recognise an F-box domain in the interval 11–55; it reads AFGLHKLPHLVSDKVVKSMVPMELFTYSMVAEETKALVKRLFKKV.

May have a role in embryogenesis. This chain is Skn-1 dependent zygotic transcript 15 protein (sdz-15), found in Caenorhabditis elegans.